Here is a 266-residue protein sequence, read N- to C-terminus: Hydroxymethylpyrimidine/phosphomethylpyrimidine kinase (266 aa).

A 4-amino-5-hydroxymethyl-2-methylpyrimidine-binding site is contributed by Q43.

This sequence belongs to the ThiD family.

The catalysed reaction is 4-amino-5-hydroxymethyl-2-methylpyrimidine + ATP = 4-amino-2-methyl-5-(phosphooxymethyl)pyrimidine + ADP + H(+). It catalyses the reaction 4-amino-2-methyl-5-(phosphooxymethyl)pyrimidine + ATP = 4-amino-2-methyl-5-(diphosphooxymethyl)pyrimidine + ADP. It participates in cofactor biosynthesis; thiamine diphosphate biosynthesis; 4-amino-2-methyl-5-diphosphomethylpyrimidine from 5-amino-1-(5-phospho-D-ribosyl)imidazole: step 2/3. Its pathway is cofactor biosynthesis; thiamine diphosphate biosynthesis; 4-amino-2-methyl-5-diphosphomethylpyrimidine from 5-amino-1-(5-phospho-D-ribosyl)imidazole: step 3/3. Catalyzes the phosphorylation of hydroxymethylpyrimidine phosphate (HMP-P) to HMP-PP, and of HMP to HMP-P. The polypeptide is Hydroxymethylpyrimidine/phosphomethylpyrimidine kinase (thiD) (Rhizobium meliloti (strain 1021) (Ensifer meliloti)).